A 148-amino-acid chain; its full sequence is Large ribosomal subunit protein uL15 (148 aa).

Residues 1–51 (MNLSNLKPAEGSTKTRKRIGRGAGSGLGGTSTRGHKGAKSRSGYSKKVGFE) are disordered. Positions 21-31 (RGAGSGLGGTS) are enriched in gly residues.

This sequence belongs to the universal ribosomal protein uL15 family. As to quaternary structure, part of the 50S ribosomal subunit.

In terms of biological role, binds to the 23S rRNA. The sequence is that of Large ribosomal subunit protein uL15 from Bacteroides thetaiotaomicron (strain ATCC 29148 / DSM 2079 / JCM 5827 / CCUG 10774 / NCTC 10582 / VPI-5482 / E50).